A 341-amino-acid chain; its full sequence is Basic membrane protein B (341 aa).

The first 14 residues, 1 to 14, serve as a signal peptide directing secretion; the sequence is MRIVIFIFGILLTS. The N-palmitoyl cysteine moiety is linked to residue C15. C15 carries S-diacylglycerol cysteine lipidation.

It belongs to the BMP lipoprotein family. In terms of assembly, monomer.

The protein resides in the cell inner membrane. Its function is as follows. May be part of an ABC-type nucleoside uptake system involved in the purine salvage pathway. This chain is Basic membrane protein B (bmpB), found in Borreliella burgdorferi (strain ATCC 35210 / DSM 4680 / CIP 102532 / B31) (Borrelia burgdorferi).